Consider the following 208-residue polypeptide: Methyl-CpG-binding domain protein 3-like 3 (208 aa).

Belongs to the MBD3L family.

This chain is Methyl-CpG-binding domain protein 3-like 3 (MBD3L3), found in Homo sapiens (Human).